Reading from the N-terminus, the 318-residue chain is Probable RNA methyltransferase At5g51130 (318 aa).

Disordered regions lie at residues 1–61 and 146–184; these read MGRD…NQEV and NSTK…DSAE. Residues 16-34 are compositionally biased toward basic and acidic residues; sequence RSNENEKSVEKVVANEEKV. Residues 37-52 show a composition bias toward low complexity; the sequence is QQKQKQQQGQQGNCNQ. Positions 82 to 318 constitute a Bin3-type SAM domain; it reads DPRLKVLKKE…FDRQILAFQK (237 aa).

Belongs to the methyltransferase superfamily.

Functionally, probable RNA methyltransferase. The sequence is that of Probable RNA methyltransferase At5g51130 from Arabidopsis thaliana (Mouse-ear cress).